The chain runs to 689 residues: Glycine--tRNA ligase beta subunit (689 aa).

It belongs to the class-II aminoacyl-tRNA synthetase family. As to quaternary structure, tetramer of two alpha and two beta subunits.

The protein localises to the cytoplasm. The enzyme catalyses tRNA(Gly) + glycine + ATP = glycyl-tRNA(Gly) + AMP + diphosphate. This Salmonella choleraesuis (strain SC-B67) protein is Glycine--tRNA ligase beta subunit.